Reading from the N-terminus, the 308-residue chain is Uridine diphosphate glucose pyrophosphatase NUDT22 (308 aa).

Residues F56, Y86, R138, A143, D150, H155, and E157 each coordinate substrate. Residues 117 to 284 enclose the Nudix hydrolase domain; that stretch reads ADPLGVGAAL…KGAILLYNRH (168 aa). The Nudix box motif lies at 174 to 195; the sequence is GLLVVRELFSSVLQEICDEVNL. Residues E188 and E192 each contribute to the Mg(2+) site. S273 serves as a coordination point for substrate.

This sequence belongs to the Nudix hydrolase family. It depends on Mg(2+) as a cofactor.

It catalyses the reaction UDP-sugar + H2O = UMP + alpha-D-aldose 1-phosphate.. Functionally, hydrolyzes UDP-glucose to glucose 1-phosphate and UMP and UDP-galactose to galactose 1-phosphate and UMP. Preferred substrate is UDP-glucose. This is Uridine diphosphate glucose pyrophosphatase NUDT22 (Nudt22) from Mus musculus (Mouse).